We begin with the raw amino-acid sequence, 406 residues long: MELPTYAVSQSLLASRSVSSPRGDQPVRAATNGTQGQGQGQDGQNLTGKRKRTNPGYPSRESPKGSSSRCNGLTQYAVPASFQSPQIVQYSPPNQILRTPPSNDVDDQLSVNSRSEPVYPTLGVPGAVRQTQEQLQLHAARIPASHFLNNVPNFGYHSTDKDVAMKQNYFSDSTFFPSPAITDTWGELPAPDLSWETTTRPHSPGNRATPTVDKHVSVSAFEAALETGELASDRSIQNAYNAPSTTGDNHLETLVSIQDGLSQVLKAVEAAGFDSLDSAVIAYYQRSSKGNEWLRQEQRLNRMRRLPVLLKELHLAAQGWGQWERRNFQEQIIKSTEDILFAELQDHLATRRNSPHASPCSIEQRSQARQHMMEHDADPEAEFYDTSHGTEGIPADEMLHVNLLLY.

Residues methionine 1–glycine 72 are disordered. A compositionally biased stretch (low complexity) spans alanine 7–serine 20.

Belongs to the bZIP family.

Its subcellular location is the nucleus. Functionally, the two putative transcription factors FPSE_09188 and FPSE_09189 could be responsible for orchestrating expression of the W493 A and B biosynthesis cluster genes. W493 A and B consist of six amino acid residues D-allo-thr, L-Ala, D-Ala, L-Gln, D-Tyr, and L-Val/L-Ile linked to a 3-hydroxy-4-methyltetradecanoic acid polyketide chain. The protein is Probable transcription factor FPSE_09188 of Fusarium pseudograminearum (strain CS3096) (Wheat and barley crown-rot fungus).